Here is a 120-residue protein sequence, read N- to C-terminus: NAD(P)H-quinone oxidoreductase subunit 3 (120 aa).

A run of 3 helical transmembrane segments spans residues Gly-6–Val-26, Met-64–Val-84, and Leu-89–Ala-109.

This sequence belongs to the complex I subunit 3 family. NDH-1 can be composed of about 15 different subunits; different subcomplexes with different compositions have been identified which probably have different functions.

Its subcellular location is the cellular thylakoid membrane. The catalysed reaction is a plastoquinone + NADH + (n+1) H(+)(in) = a plastoquinol + NAD(+) + n H(+)(out). It catalyses the reaction a plastoquinone + NADPH + (n+1) H(+)(in) = a plastoquinol + NADP(+) + n H(+)(out). In terms of biological role, NDH-1 shuttles electrons from an unknown electron donor, via FMN and iron-sulfur (Fe-S) centers, to quinones in the respiratory and/or the photosynthetic chain. The immediate electron acceptor for the enzyme in this species is believed to be plastoquinone. Couples the redox reaction to proton translocation, and thus conserves the redox energy in a proton gradient. Cyanobacterial NDH-1 also plays a role in inorganic carbon-concentration. This is NAD(P)H-quinone oxidoreductase subunit 3 from Synechococcus sp. (strain WH7803).